Here is a 243-residue protein sequence, read N- to C-terminus: Large ribosomal subunit protein uL2 (243 aa).

The interval 198–243 (VDHPFGGGGRQHPGKPKSVSRDTPPGRKVGDIASKRTGRGGKGGQE) is disordered. Basic and acidic residues predominate over residues 221–231 (PPGRKVGDIAS).

It belongs to the universal ribosomal protein uL2 family. Part of the 50S ribosomal subunit. Forms a bridge to the 30S subunit in the 70S ribosome.

Its function is as follows. One of the primary rRNA binding proteins. Required for association of the 30S and 50S subunits to form the 70S ribosome, for tRNA binding and peptide bond formation. It has been suggested to have peptidyltransferase activity; this is somewhat controversial. Makes several contacts with the 16S rRNA in the 70S ribosome. This is Large ribosomal subunit protein uL2 from Natronomonas pharaonis (strain ATCC 35678 / DSM 2160 / CIP 103997 / JCM 8858 / NBRC 14720 / NCIMB 2260 / Gabara) (Halobacterium pharaonis).